Reading from the N-terminus, the 413-residue chain is ATP phosphoribosyltransferase regulatory subunit (413 aa).

The disordered stretch occupies residues 1–21 (MRSRAARKFSTTPGTRDVLPP).

It belongs to the class-II aminoacyl-tRNA synthetase family. HisZ subfamily. In terms of assembly, heteromultimer composed of HisG and HisZ subunits.

Its subcellular location is the cytoplasm. It functions in the pathway amino-acid biosynthesis; L-histidine biosynthesis; L-histidine from 5-phospho-alpha-D-ribose 1-diphosphate: step 1/9. Functionally, required for the first step of histidine biosynthesis. May allow the feedback regulation of ATP phosphoribosyltransferase activity by histidine. This chain is ATP phosphoribosyltransferase regulatory subunit, found in Rubrobacter xylanophilus (strain DSM 9941 / JCM 11954 / NBRC 16129 / PRD-1).